Consider the following 500-residue polypeptide: Glycerol kinase (500 aa).

Thr-11 contacts ADP. Residues Thr-11, Thr-12, and Ser-13 each coordinate ATP. A sn-glycerol 3-phosphate-binding site is contributed by Thr-11. Arg-15 contacts ADP. Sn-glycerol 3-phosphate is bound by residues Arg-81, Glu-82, Tyr-133, and Asp-242. Residues Arg-81, Glu-82, Tyr-133, Asp-242, and Gln-243 each coordinate glycerol. Thr-264 and Gly-307 together coordinate ADP. The ATP site is built by Thr-264, Gly-307, Gln-311, and Gly-411. ADP is bound at residue Gly-411.

This sequence belongs to the FGGY kinase family.

It catalyses the reaction glycerol + ATP = sn-glycerol 3-phosphate + ADP + H(+). The protein operates within polyol metabolism; glycerol degradation via glycerol kinase pathway; sn-glycerol 3-phosphate from glycerol: step 1/1. With respect to regulation, inhibited by fructose 1,6-bisphosphate (FBP). Functionally, key enzyme in the regulation of glycerol uptake and metabolism. Catalyzes the phosphorylation of glycerol to yield sn-glycerol 3-phosphate. In Bradyrhizobium sp. (strain ORS 278), this protein is Glycerol kinase.